Consider the following 347-residue polypeptide: Ileal sodium/bile acid cotransporter (347 aa).

At Met-1 to Ala-29 the chain is on the extracellular side. 2 N-linked (GlcNAc...) asparagine glycosylation sites follow: Asn-3 and Asn-11. Residues Ile-30–Met-50 form a helical membrane-spanning segment. At Gly-51 to Thr-83 the chain is on the cytoplasmic side. A helical membrane pass occupies residues Gly-84–Met-104. Over Gly-105–Ser-127 the chain is Extracellular. Residues Val-128–Val-148 traverse the membrane as a helical segment. Over Tyr-149–Thr-158 the chain is Cytoplasmic. A helical membrane pass occupies residues Ile-159–Ile-179. Topologically, residues Gly-180–Lys-196 are extracellular. A helical membrane pass occupies residues Val-197–Tyr-217. The Cytoplasmic portion of the chain corresponds to Gln-218–Pro-225. The chain crosses the membrane as a helical span at residues Lys-226–Ala-246. Topologically, residues Arg-247–Thr-289 are extracellular. Residues Phe-290–Val-310 traverse the membrane as a helical segment. Residues Ala-311–Glu-347 lie on the Cytoplasmic side of the membrane. The span at Phe-323–Ser-335 shows a compositional bias: basic and acidic residues. The disordered stretch occupies residues Phe-323–Glu-347. A Phosphoserine modification is found at Ser-336.

It belongs to the bile acid:sodium symporter (BASS) (TC 2.A.28) family. Monomer and homodimer.

It is found in the membrane. The enzyme catalyses taurocholate(out) + 2 Na(+)(out) = taurocholate(in) + 2 Na(+)(in). The catalysed reaction is cholate(out) + 2 Na(+)(out) = cholate(in) + 2 Na(+)(in). It catalyses the reaction taurochenodeoxycholate(out) + 2 Na(+)(out) = taurochenodeoxycholate(in) + 2 Na(+)(in). It carries out the reaction tauroursodeoxycholate(out) + 2 Na(+)(out) = tauroursodeoxycholate(in) + 2 Na(+)(in). The enzyme catalyses glycocholate(out) + 2 Na(+)(out) = glycocholate(in) + 2 Na(+)(in). The catalysed reaction is tauronorcholate(out) + 2 Na(+)(out) = tauronorcholate(in) + 2 Na(+)(in). It catalyses the reaction tauroallocholate(out) + 2 Na(+)(out) = tauroallocholate(in) + 2 Na(+)(in). It carries out the reaction taurodeoxycholate(out) + 2 Na(+)(out) = taurodeoxycholate(in) + 2 Na(+)(in). The enzyme catalyses tauro-beta-muricholate(out) + 2 Na(+)(out) = tauro-beta-muricholate(in) + 2 Na(+)(in). Functionally, plays a critical role in the sodium-dependent reabsorption of bile acids from the lumen of the small intestine. Transports various bile acids, unconjugated or conjugated, such as cholate and taurocholate. Also responsible for bile acid transport in the renal proximal tubules, a salvage mechanism that helps conserve bile acids. Works collaboratively with the Na(+)-taurocholate cotransporting polypeptide (NTCP), the organic solute transporter (OST), and the bile salt export pump (BSEP), to ensure efficacious biological recycling of bile acids during enterohepatic circulation. The protein is Ileal sodium/bile acid cotransporter (SLC10A2) of Oryctolagus cuniculus (Rabbit).